Here is a 299-residue protein sequence, read N- to C-terminus: Protein PRY1 (299 aa).

A signal peptide spans 1–19 (MKLSKLSILTSALATSALA). Residues 103–157 (TDSTTTLTSSESTSQSLAQATTTSTPAAASTTSTPAATTTTSQAAATSSASSSDS) are disordered. The SCP domain maps to 167–281 (LAEHNKKRAL…AWGDYVICSY (115 aa)).

The protein belongs to the CRISP family. O-glycosylated.

Its subcellular location is the secreted. In terms of biological role, secreted protein required for efficient export of lipids such as acetylated sterols. Acts in detoxification of hydrophobic compounds. The protein is Protein PRY1 of Saccharomyces cerevisiae (strain ATCC 204508 / S288c) (Baker's yeast).